Reading from the N-terminus, the 239-residue chain is 1-(5-phosphoribosyl)-5-[(5-phosphoribosylamino)methylideneamino] imidazole-4-carboxamide isomerase (239 aa).

The Proton acceptor role is filled by Asp-8. The active-site Proton donor is Asp-129.

The protein belongs to the HisA/HisF family.

Its subcellular location is the cytoplasm. The catalysed reaction is 1-(5-phospho-beta-D-ribosyl)-5-[(5-phospho-beta-D-ribosylamino)methylideneamino]imidazole-4-carboxamide = 5-[(5-phospho-1-deoxy-D-ribulos-1-ylimino)methylamino]-1-(5-phospho-beta-D-ribosyl)imidazole-4-carboxamide. It functions in the pathway amino-acid biosynthesis; L-histidine biosynthesis; L-histidine from 5-phospho-alpha-D-ribose 1-diphosphate: step 4/9. This chain is 1-(5-phosphoribosyl)-5-[(5-phosphoribosylamino)methylideneamino] imidazole-4-carboxamide isomerase, found in Bacillus cereus (strain AH187).